A 125-amino-acid chain; its full sequence is MAITKEDILNAVAEMSVMDVCDLVKMMEDKFGVSAAAAVAVAAGPVAGPVEAAEEKTEFDVVLVDAGSNKIAAIKAVRGATGLGLKEAKDAVEGTPFTVKEAASKEEAEALKKQLEEAGAKVELK.

Belongs to the bacterial ribosomal protein bL12 family. In terms of assembly, homodimer. Part of the ribosomal stalk of the 50S ribosomal subunit. Forms a multimeric L10(L12)X complex, where L10 forms an elongated spine to which 2 to 4 L12 dimers bind in a sequential fashion. Binds GTP-bound translation factors.

Forms part of the ribosomal stalk which helps the ribosome interact with GTP-bound translation factors. Is thus essential for accurate translation. The sequence is that of Large ribosomal subunit protein bL12 from Francisella tularensis subsp. holarctica (strain FTNF002-00 / FTA).